Here is a 259-residue protein sequence, read N- to C-terminus: Isoepoxydon dehydrogenase patN (259 aa).

Positions 96 and 125 each coordinate NADP(+). Catalysis depends on proton donor residues S143 and S144. Positions 158, 162, and 191 each coordinate NADP(+). Y158 acts as the Proton acceptor in catalysis. K162 (lowers pKa of active site Tyr) is an active-site residue.

This sequence belongs to the short-chain dehydrogenases/reductases (SDR) family.

Its subcellular location is the cytoplasm. The protein localises to the cytosol. It carries out the reaction isoepoxydon + NADP(+) = phyllostine + NADPH + H(+). Its pathway is mycotoxin biosynthesis; patulin biosynthesis. Its function is as follows. Isoepoxydon dehydrogenase; part of the gene cluster that mediates the biosynthesis of patulin, an acetate-derived tetraketide mycotoxin produced by several fungal species that shows antimicrobial properties against several bacteria. PatN catalyzes the conversion of isoepoxydon into phyllostine. The pathway begins with the synthesis of 6-methylsalicylic acid by the polyketide synthase (PKS) patK via condensation of acetate and malonate units. The 6-methylsalicylic acid decarboxylase patG then catalyzes the decarboxylation of 6-methylsalicylic acid to yield m-cresol (also known as 3-methylphenol). These first reactions occur in the cytosol. The intermediate m-cresol is then transported into the endoplasmic reticulum where the cytochrome P450 monooxygenase patH converts it to m-hydroxybenzyl alcohol, which is further converted to gentisyl alcohol by the cytochrome P450 monooxygenase patI. The oxidoreductases patJ and patO further convert gentisyl alcohol to isoepoxydon in the vacuole. PatN catalyzes then the transformation of isoepoxydon into phyllostine. The cluster protein patF is responsible for the conversion from phyllostine to neopatulin whereas the alcohol dehydrogenase patD converts neopatulin to E-ascladiol. The steps between isoepoxydon and E-ascladiol occur in the cytosol, and E-ascladiol is probably secreted to the extracellular space by one of the cluster-specific transporters patC or patM. Finally, the secreted patulin synthase patE catalyzes the conversion of E-ascladiol to patulin. This Aspergillus clavatus (strain ATCC 1007 / CBS 513.65 / DSM 816 / NCTC 3887 / NRRL 1 / QM 1276 / 107) protein is Isoepoxydon dehydrogenase patN.